Consider the following 81-residue polypeptide: Gamma-conotoxin-like TxMEKL-0511 (81 aa).

The signal sequence occupies residues 1 to 19 (MEKLTILLLVAAVLLSIQA). Positions 20 to 45 (LNQEKHQRAKINLLSKRKPPAERWWR) are excised as a propeptide. 3 disulfide bridges follow: Cys-49–Cys-63, Cys-56–Cys-67, and Cys-62–Cys-72.

The protein belongs to the conotoxin O2 superfamily. In terms of tissue distribution, expressed by the venom duct.

It localises to the secreted. Its function is as follows. Gamma-conotoxins may act on voltage-gated non-specific cation pacemaker channels (HCN). This is Gamma-conotoxin-like TxMEKL-0511 from Conus textile (Cloth-of-gold cone).